The following is a 105-amino-acid chain: ATP synthase subunit c (105 aa).

The next 2 helical transmembrane spans lie at 32–52 (SILGAMIGLGIAAFGGAIGMG) and 78–98 (VAMAMIEAQVIYTLVFAIIAI).

The protein belongs to the ATPase C chain family. As to quaternary structure, F-type ATPases have 2 components, F(1) - the catalytic core - and F(0) - the membrane proton channel. F(1) has five subunits: alpha(3), beta(3), gamma(1), delta(1), epsilon(1). F(0) has three main subunits: a(1), b(2) and c(10-14). The alpha and beta chains form an alternating ring which encloses part of the gamma chain. F(1) is attached to F(0) by a central stalk formed by the gamma and epsilon chains, while a peripheral stalk is formed by the delta and b chains.

It is found in the cell inner membrane. F(1)F(0) ATP synthase produces ATP from ADP in the presence of a proton or sodium gradient. F-type ATPases consist of two structural domains, F(1) containing the extramembraneous catalytic core and F(0) containing the membrane proton channel, linked together by a central stalk and a peripheral stalk. During catalysis, ATP synthesis in the catalytic domain of F(1) is coupled via a rotary mechanism of the central stalk subunits to proton translocation. In terms of biological role, key component of the F(0) channel; it plays a direct role in translocation across the membrane. A homomeric c-ring of between 10-14 subunits forms the central stalk rotor element with the F(1) delta and epsilon subunits. This is ATP synthase subunit c from Helicobacter pylori (strain ATCC 700392 / 26695) (Campylobacter pylori).